Here is a 317-residue protein sequence, read N- to C-terminus: Glycine--tRNA ligase alpha subunit (317 aa).

Belongs to the class-II aminoacyl-tRNA synthetase family. Tetramer of two alpha and two beta subunits.

Its subcellular location is the cytoplasm. It catalyses the reaction tRNA(Gly) + glycine + ATP = glycyl-tRNA(Gly) + AMP + diphosphate. This chain is Glycine--tRNA ligase alpha subunit, found in Cupriavidus metallidurans (strain ATCC 43123 / DSM 2839 / NBRC 102507 / CH34) (Ralstonia metallidurans).